A 311-amino-acid polypeptide reads, in one-letter code: MALPIIIDCDPGHDDAIALVLALASPELEVKAITSSAGNQTPEKTLRNVLRMLTLLKRPDIPVAGGAVKPLMRELIIADNVHGESGLDGPALPEPSFAPQSGTAVELMAKTLRESAQPVTIVSTGPQTNVALLLNSHPELHTKIARIVIMGGAMGLGNWTPAAEFNIYVDPEAAEIVFQSGIPVVMAGLDVTHKAQIHAADIERFRDIGNPISTIVAELLDFFFEYHKDEKWGFVGAPLHAPCTIAWLLKPEIFTTVERWVGVETKGKYTQGMTVVDYYFLTGNKPNATVMVDVDRQGFVDLLAERLQYYA.

Residue histidine 240 is part of the active site.

Belongs to the IUNH family. RihA subfamily.

Functionally, hydrolyzes cytidine or uridine to ribose and cytosine or uracil, respectively. This is Pyrimidine-specific ribonucleoside hydrolase RihA from Salmonella choleraesuis (strain SC-B67).